A 45-amino-acid polypeptide reads, in one-letter code: Bomanin Short 2 (45 aa).

The signal sequence occupies residues 1–20 (MKFFSVVTVFVFGLLALANA). Positions 21-27 (VPLSPDP) are cleaved as a propeptide — removed by a dipeptidylpeptidase. Cys36 and Cys39 are joined by a disulfide. Gly43 bears the Glycine amide mark.

Hemolymph (at protein level).

It localises to the secreted. Secreted immune-induced peptide induced by Toll signaling. Has a role in resistance to bacterial and fungal infections. This chain is Bomanin Short 2, found in Drosophila melanogaster (Fruit fly).